A 1202-amino-acid polypeptide reads, in one-letter code: Adenine-specific methyltransferase PglX (1202 aa).

Belongs to the methyltransferase superfamily. PglX adenine methyltransferase family.

The enzyme catalyses a 2'-deoxyadenosine in DNA + S-adenosyl-L-methionine = an N(6)-methyl-2'-deoxyadenosine in DNA + S-adenosyl-L-homocysteine + H(+). Functionally, BREX systems (bacteriophage exclusion) provide immunity against bacteriophage. Part of a type 1 BREX system which protects against dsDNA phage. This system allows phage adsorption but prevents phage DNA replication, without degradation of the phage DNA. Methylation of bacterial DNA by this protein guides self/non-self discrimination. Its function is as follows. Probably methylates the adenine in the fifth position of the hexamer 5'-ACRCAG-3' in genomic DNA. N(6)-methylated adenine on the fifth position of 5'-ACRCAG-3' is found in the genome; there are 1906 sites in the genomic DNA. This Lacticaseibacillus casei (strain Zhang) (Lactobacillus casei) protein is Adenine-specific methyltransferase PglX.